The sequence spans 420 residues: Carboxypeptidase A4 (420 aa).

A signal peptide spans 1 to 16 (MKWLLFFGALIGAGIC). The propeptide at 17–113 (GRDKFFGDQV…EMQHNEGIER (97 aa)) is activation peptide. 7 residues coordinate a protein: proline 69, valine 71, asparagine 118, tyrosine 122, histidine 123, glutamate 126, and phenylalanine 162. In terms of domain architecture, Peptidase M14 spans 121-415 (AYHPLEAIYH…LGLKTIMEHV (295 aa)). Residues histidine 180 and glutamate 183 each coordinate Zn(2+). The cysteines at positions 249 and 272 are disulfide-linked. Asparagine 259 carries N-linked (GlcNAc...) asparagine glycosylation. Histidine 307 serves as a coordination point for Zn(2+). Glutamate 381 (proton donor/acceptor) is an active-site residue.

Belongs to the peptidase M14 family. As to quaternary structure, interacts with LXN. Zn(2+) serves as cofactor.

The protein localises to the secreted. In terms of biological role, metalloprotease that cleaves hydrophobic C-terminal residues with a preference for -Phe, -Leu, -Ile, -Met, -Tyr and -Val. May function in peptide hormone and/or neuropeptide catabolism. This chain is Carboxypeptidase A4 (Cpa4), found in Mus musculus (Mouse).